Reading from the N-terminus, the 435-residue chain is Nuclear distribution protein nudF 2 (435 aa).

Residues Gln9–Glu41 form the LisH domain. WD repeat units follow at residues Ser86–Thr125, Gly128–Arg171, Gly175–Thr214, Gly217–Leu256, Ala280–Leu320, Gly322–Lys361, Thr366–Ile396, and Pro397–Ala434.

This sequence belongs to the WD repeat LIS1/nudF family. As to quaternary structure, self-associates. Interacts with nudE and dynein.

It localises to the cytoplasm. It is found in the cytoskeleton. The protein localises to the spindle pole. Its function is as follows. Positively regulates the activity of the minus-end directed microtubule motor protein dynein. May enhance dynein-mediated microtubule sliding by targeting dynein to the microtubule plus end. Required for nuclear migration during vegetative growth as well as development. Required for retrograde early endosome (EE) transport from the hyphal tip. Required for localization of dynein to the mitotic spindle poles. Recruits additional proteins to the dynein complex at SPBs. The protein is Nuclear distribution protein nudF 2 of Aspergillus clavatus (strain ATCC 1007 / CBS 513.65 / DSM 816 / NCTC 3887 / NRRL 1 / QM 1276 / 107).